Here is a 1008-residue protein sequence, read N- to C-terminus: P3N-PIPO polyprotein (1008 aa).

The Peptidase S30 domain occupies 180-322; the sequence is QRANADVDHL…ECSKDKIHQY (143 aa). Residues histidine 233, glutamate 242, and serine 275 each act as for P1 proteinase activity in the active site. An Involved in interaction with stylet and aphid transmission motif is present at residues 374–377; that stretch reads KVSC. The Involved in virions binding and aphid transmission signature appears at 631–633; sequence PTK. The region spanning 657-779 is the Peptidase C6 domain; it reads MYVAKEGYCY…VSEMKHYVVG (123 aa). Residues cysteine 665 and histidine 738 each act as for helper component proteinase activity in the active site.

It belongs to the potyviridae P3N-PIPO polyprotein family. Interacts (via PIPO domain) with host PCaP1 protein; this interaction may help to anchor the movement complex to the plasma membrane from which the complex could move to the plasmodesmata. Potyviral RNA is expressed as two polyproteins which undergo post-translational proteolytic processing. Genome polyprotein is processed by NIa-pro, P1 and HC-pro proteinases resulting in the production of at least ten individual proteins. P3N-PIPO is cleaved by P1 and HC-pro proteinases resulting in the production of three individual proteins. The P1 proteinase and the HC-pro cleave only their respective C-termini autocatalytically.

The protein resides in the host cell junction. The protein localises to the host plasmodesma. The catalysed reaction is Hydrolyzes a Gly-|-Gly bond at its own C-terminus, commonly in the sequence -Tyr-Xaa-Val-Gly-|-Gly, in the processing of the potyviral polyprotein.. In terms of biological role, required for aphid transmission and also has proteolytic activity. Only cleaves a Gly-Gly dipeptide at its own C-terminus. Interacts with virions and aphid stylets. Acts as a suppressor of RNA-mediated gene silencing, also known as post-transcriptional gene silencing (PTGS), a mechanism of plant viral defense that limits the accumulation of viral RNAs. May have RNA-binding activity. Functionally, allows efficient cell to cell propagation, by bypassing the host cell wall barrier. Transports viral genome to neighboring plant cells directly through plasmosdesmata, without any budding. This Peanut mottle virus (strain M) protein is P3N-PIPO polyprotein.